The following is a 161-amino-acid chain: Protein-export protein SecB (161 aa).

The protein belongs to the SecB family. In terms of assembly, homotetramer, a dimer of dimers. One homotetramer interacts with 1 SecA dimer.

The protein localises to the cytoplasm. Functionally, one of the proteins required for the normal export of preproteins out of the cell cytoplasm. It is a molecular chaperone that binds to a subset of precursor proteins, maintaining them in a translocation-competent state. It also specifically binds to its receptor SecA. The polypeptide is Protein-export protein SecB (Rhodopseudomonas palustris (strain BisA53)).